A 383-amino-acid polypeptide reads, in one-letter code: Protein RecA (383 aa).

Residue 79 to 86 (GPESSGKT) participates in ATP binding. The interval 347-369 (IEEDNTEEKQSSKEKETDEKADK) is disordered. Over residues 353-369 (EEKQSSKEKETDEKADK) the composition is skewed to basic and acidic residues.

The protein belongs to the RecA family.

Its subcellular location is the cytoplasm. Can catalyze the hydrolysis of ATP in the presence of single-stranded DNA, the ATP-dependent uptake of single-stranded DNA by duplex DNA, and the ATP-dependent hybridization of homologous single-stranded DNAs. It interacts with LexA causing its activation and leading to its autocatalytic cleavage. In Streptococcus mutans serotype c (strain ATCC 700610 / UA159), this protein is Protein RecA.